The chain runs to 248 residues: Deoxyribose-phosphate aldolase (248 aa).

The active-site Proton donor/acceptor is the aspartate 117. The Schiff-base intermediate with acetaldehyde role is filled by lysine 179. The active-site Proton donor/acceptor is the lysine 208.

This sequence belongs to the DeoC/FbaB aldolase family. DeoC type 1 subfamily.

It localises to the cytoplasm. It carries out the reaction 2-deoxy-D-ribose 5-phosphate = D-glyceraldehyde 3-phosphate + acetaldehyde. It participates in carbohydrate degradation; 2-deoxy-D-ribose 1-phosphate degradation; D-glyceraldehyde 3-phosphate and acetaldehyde from 2-deoxy-alpha-D-ribose 1-phosphate: step 2/2. Functionally, catalyzes a reversible aldol reaction between acetaldehyde and D-glyceraldehyde 3-phosphate to generate 2-deoxy-D-ribose 5-phosphate. The protein is Deoxyribose-phosphate aldolase of Thermotoga maritima (strain ATCC 43589 / DSM 3109 / JCM 10099 / NBRC 100826 / MSB8).